The sequence spans 469 residues: Argininosuccinate lyase (469 aa).

The protein belongs to the lyase 1 family. Argininosuccinate lyase subfamily.

It localises to the cytoplasm. It carries out the reaction 2-(N(omega)-L-arginino)succinate = fumarate + L-arginine. It functions in the pathway amino-acid biosynthesis; L-arginine biosynthesis; L-arginine from L-ornithine and carbamoyl phosphate: step 3/3. This chain is Argininosuccinate lyase, found in Polaromonas naphthalenivorans (strain CJ2).